A 147-amino-acid chain; its full sequence is Cyanate hydratase (147 aa).

Catalysis depends on residues Arg-88, Glu-91, and Ser-114.

This sequence belongs to the cyanase family.

The catalysed reaction is cyanate + hydrogencarbonate + 3 H(+) = NH4(+) + 2 CO2. Catalyzes the reaction of cyanate with bicarbonate to produce ammonia and carbon dioxide. This chain is Cyanate hydratase, found in Acaryochloris marina (strain MBIC 11017).